A 118-amino-acid chain; its full sequence is Cell division protein FtsB (118 aa).

Topologically, residues 1–6 (MRNWRW) are cytoplasmic. The helical transmembrane segment at 7–24 (LLLVLAALLAWLQHRFWF) threads the bilayer. The Periplasmic portion of the chain corresponds to 25-118 (GPGNSGEVRM…DLSQPRREKR (94 aa)). Residues 30-66 (GEVRMLQVQIVQQHQENERLRQRNASLAAEVKNLKDG) adopt a coiled-coil conformation. Residues 98–118 (LPNDTSADHGVDLSQPRREKR) form a disordered region. Residues 103 to 118 (SADHGVDLSQPRREKR) are compositionally biased toward basic and acidic residues.

It belongs to the FtsB family. Part of a complex composed of FtsB, FtsL and FtsQ.

The protein resides in the cell inner membrane. In terms of biological role, essential cell division protein. May link together the upstream cell division proteins, which are predominantly cytoplasmic, with the downstream cell division proteins, which are predominantly periplasmic. This chain is Cell division protein FtsB, found in Xylella fastidiosa (strain M23).